The following is a 371-amino-acid chain: D-alanine--D-alanine ligase (371 aa).

The ATP-grasp domain maps to 154 to 361; it reads KKLLVAEGLP…YPTLLAAMVD (208 aa). An ATP-binding site is contributed by 182 to 237; it reads RERLGLPVFVKPARGGSSIGVSRVSDWAELPAAIEAARRHDPKVIVEAGIAGRELE. Mg(2+) is bound by residues Asp-316, Glu-328, and Asn-330.

This sequence belongs to the D-alanine--D-alanine ligase family. Mg(2+) serves as cofactor. Mn(2+) is required as a cofactor.

The protein localises to the cytoplasm. The enzyme catalyses 2 D-alanine + ATP = D-alanyl-D-alanine + ADP + phosphate + H(+). It participates in cell wall biogenesis; peptidoglycan biosynthesis. Its function is as follows. Cell wall formation. This is D-alanine--D-alanine ligase from Mycobacterium sp. (strain JLS).